A 246-amino-acid chain; its full sequence is 2-deoxyglucose-6-phosphate phosphatase 1 (246 aa).

The active-site Nucleophile is aspartate 83. Aspartate 83 serves as a coordination point for Mg(2+). Residues aspartate 83, glutamate 92, and 146–149 (DVKN) contribute to the substrate site. Aspartate 183 is a Mg(2+) binding site.

Belongs to the HAD-like hydrolase superfamily. DOG/GPP family. It depends on Mg(2+) as a cofactor.

It carries out the reaction 2-deoxy-D-glucose 6-phosphate + H2O = 2-deoxy-D-glucose + phosphate. In terms of biological role, phosphatase that is active on 2-deoxy-D-glucose 6-phosphate (2-DOG-6P), as well as on fructose-1-P. The sequence is that of 2-deoxyglucose-6-phosphate phosphatase 1 from Saccharomyces cerevisiae (strain ATCC 204508 / S288c) (Baker's yeast).